Reading from the N-terminus, the 342-residue chain is MNIGIVNDLPLAVEALRRTIALRPEHRVLWVATDGAQALDFCVAQPPDLVLMDLVMPRIDGVSATRSIMERSPCAILIVTANVGANASYVYEAMGAGALDAVDTPTLEQGGSADPSQPLLAKIDQIGRLLATRMPLAAPAAAAPAPQGALPPLVAIGASAGGPTALTALLRRLPDDFPAALVIVQHVDQAFAIGMAQWLDGYSPLPVRIARQGSVPQAGEVLLAATNDHLHLTSRGVLAYTRRPEETPYRPSVDVFFHSVVDHWKGEAIGVLLTGMGRDGALGLKAMRTKGHYTIAQDEATSAVYGMPKAAAAIGAASAVLPLERIADQLISLVQRNRQRWR.

The 118-residue stretch at 2-119 (NIGIVNDLPL…GGSADPSQPL (118 aa)) folds into the Response regulatory domain. The residue at position 53 (aspartate 53) is a 4-aspartylphosphate. The 194-residue stretch at 144–337 (PAPQGALPPL…DQLISLVQRN (194 aa)) folds into the CheB-type methylesterase domain. Catalysis depends on residues serine 159, histidine 186, and aspartate 279.

The protein belongs to the CheB family. Post-translationally, phosphorylated by CheA. Phosphorylation of the N-terminal regulatory domain activates the methylesterase activity.

It localises to the cytoplasm. It carries out the reaction [protein]-L-glutamate 5-O-methyl ester + H2O = L-glutamyl-[protein] + methanol + H(+). It catalyses the reaction L-glutaminyl-[protein] + H2O = L-glutamyl-[protein] + NH4(+). In terms of biological role, involved in chemotaxis. Part of a chemotaxis signal transduction system that modulates chemotaxis in response to various stimuli. Catalyzes the demethylation of specific methylglutamate residues introduced into the chemoreceptors (methyl-accepting chemotaxis proteins or MCP) by CheR. Also mediates the irreversible deamidation of specific glutamine residues to glutamic acid. This is Protein-glutamate methylesterase/protein-glutamine glutaminase 2 from Burkholderia mallei (strain ATCC 23344).